We begin with the raw amino-acid sequence, 450 residues long: MSNHKEFSEALKVIPGGVDSPVRAFKNVGSEPFMVQKGKGAYIYDIEGNKYLDFVQSWGPLIFGHADKDIQDAVIKTAKSGLSFGASSPLETKLAKLILSKFDWLDKIRFVSSGTEATMSAIRLARGFSGKDKIIKFEGCYHGHSDSLLVKAGSGATTFGSSSSAGVPEDTAKNTYLAIYNDIDSVKNIVEKEDIGTIIIEPIAGNMGLVPADKEFLIKLRKICDEKKIVLILDEVMSGFRAGELGSYGIYGIKGDIVTFGKVIGGGMNVAAFAGKKEIMDMISPLGPVYQAGTLSGNPVSMAAGIASLTKIFASRNLYTKLENLANMFMIGLKNIAKNHGIAIQVAVRGSMFGYFFTDKAVKNYNDALSADTKMFAKFHSGMIKEGIFLAPSQFETGFICDAMSEKEINFALKKANKVFDEISKDSAKKANKTKICSKKTVKKSVKNKK.

Lys262 bears the N6-(pyridoxal phosphate)lysine mark.

The protein belongs to the class-III pyridoxal-phosphate-dependent aminotransferase family. HemL subfamily. As to quaternary structure, homodimer. Pyridoxal 5'-phosphate is required as a cofactor.

It localises to the cytoplasm. The catalysed reaction is (S)-4-amino-5-oxopentanoate = 5-aminolevulinate. It participates in porphyrin-containing compound metabolism; protoporphyrin-IX biosynthesis; 5-aminolevulinate from L-glutamyl-tRNA(Glu): step 2/2. In Campylobacter hominis (strain ATCC BAA-381 / DSM 21671 / CCUG 45161 / LMG 19568 / NCTC 13146 / CH001A), this protein is Glutamate-1-semialdehyde 2,1-aminomutase.